The following is a 418-amino-acid chain: 3-phosphoshikimate 1-carboxyvinyltransferase (418 aa).

Residues K26, S27, and R31 each coordinate 3-phosphoshikimate. A phosphoenolpyruvate-binding site is contributed by K26. Phosphoenolpyruvate contacts are provided by G97 and R125. 3-phosphoshikimate-binding residues include S170, S171, Q172, D297, N320, and K324. Q172 is a binding site for phosphoenolpyruvate. The active-site Proton acceptor is the D297. 3 residues coordinate phosphoenolpyruvate: R328, R375, and K400.

The protein belongs to the EPSP synthase family. Monomer.

The protein resides in the cytoplasm. It catalyses the reaction 3-phosphoshikimate + phosphoenolpyruvate = 5-O-(1-carboxyvinyl)-3-phosphoshikimate + phosphate. It functions in the pathway metabolic intermediate biosynthesis; chorismate biosynthesis; chorismate from D-erythrose 4-phosphate and phosphoenolpyruvate: step 6/7. Functionally, catalyzes the transfer of the enolpyruvyl moiety of phosphoenolpyruvate (PEP) to the 5-hydroxyl of shikimate-3-phosphate (S3P) to produce enolpyruvyl shikimate-3-phosphate and inorganic phosphate. This Pseudomonas savastanoi pv. phaseolicola (strain 1448A / Race 6) (Pseudomonas syringae pv. phaseolicola (strain 1448A / Race 6)) protein is 3-phosphoshikimate 1-carboxyvinyltransferase.